A 111-amino-acid polypeptide reads, in one-letter code: MVMLNKTITSAKSAGEDREAGYVGKVLKVFPDEQRVIVEGVNVRVFHEKPSRSNREGGRTEREAPIHVSNVNPIDSNGESTRIGRKKVEDPDTGRSRWVRYAKTTGEELDD.

Basic and acidic residues predominate over residues 48–65 (EKPSRSNREGGRTEREAP). The segment at 48 to 111 (EKPSRSNREG…AKTTGEELDD (64 aa)) is disordered. The segment covering 69–80 (SNVNPIDSNGES) has biased composition (polar residues). The segment covering 86–95 (KKVEDPDTGR) has biased composition (basic and acidic residues).

Belongs to the universal ribosomal protein uL24 family. In terms of assembly, part of the 50S ribosomal subunit.

Its function is as follows. One of two assembly initiator proteins, it binds directly to the 5'-end of the 23S rRNA, where it nucleates assembly of the 50S subunit. Functionally, one of the proteins that surrounds the polypeptide exit tunnel on the outside of the subunit. This is Large ribosomal subunit protein uL24 from Salinibacter ruber (strain DSM 13855 / M31).